A 242-amino-acid polypeptide reads, in one-letter code: Glutamate transport ATP-binding protein GluA (242 aa).

The region spanning Ile2–Leu236 is the ABC transporter domain. Residue Gly34–Ser41 participates in ATP binding.

The protein belongs to the ABC transporter superfamily. In terms of assembly, the complex is composed of two ATP-binding proteins (GluA), two transmembrane proteins (GluC and GluD) and a solute-binding protein (GluB).

The protein localises to the cell membrane. The catalysed reaction is a polar amino acid(out) + ATP + H2O = a polar amino acid(in) + ADP + phosphate + H(+). The enzyme catalyses L-glutamate(out) + ATP + H2O = L-glutamate(in) + ADP + phosphate + H(+). In terms of biological role, part of the ABC transporter complex GluABCD involved in glutamate uptake. Probably responsible for energy coupling to the transport system. In Corynebacterium glutamicum (strain ATCC 13032 / DSM 20300 / JCM 1318 / BCRC 11384 / CCUG 27702 / LMG 3730 / NBRC 12168 / NCIMB 10025 / NRRL B-2784 / 534), this protein is Glutamate transport ATP-binding protein GluA.